The chain runs to 180 residues: Inner membrane-spanning protein YciB (180 aa).

The next 5 helical transmembrane spans lie at 11 to 31, 52 to 72, 76 to 96, 121 to 141, and 149 to 169; these read ILFF…ALII, IIMG…NKVE, WKVT…QYGF, LAWA…SQYC, and FKSF…GIYV.

Belongs to the YciB family.

It is found in the cell inner membrane. Functionally, plays a role in cell envelope biogenesis, maintenance of cell envelope integrity and membrane homeostasis. The polypeptide is Inner membrane-spanning protein YciB (Mannheimia succiniciproducens (strain KCTC 0769BP / MBEL55E)).